Here is a 234-residue protein sequence, read N- to C-terminus: Venom allergen 3 (234 aa).

A signal peptide spans methionine 1–alanine 22. 4 disulfide bridges follow: cysteine 26-cysteine 41, cysteine 31-cysteine 125, cysteine 52-cysteine 118, and cysteine 198-cysteine 216. In terms of domain architecture, SCP spans valine 69–tyrosine 218. The disordered stretch occupies residues alanine 80–proline 99.

This sequence belongs to the CRISP family. In terms of tissue distribution, expressed by the venom gland.

It is found in the secreted. In Solenopsis invicta (Red imported fire ant), this protein is Venom allergen 3.